The primary structure comprises 470 residues: Desmin (470 aa).

The tract at residues 2-108 (SQAYSSSQRV…QEFLTTRTNE (107 aa)) is head. Ser-7 carries the post-translational modification Phosphoserine; by CDK1. Ser-12 is modified (phosphoserine; by AURKB). Residue Arg-16 is modified to Omega-N-methylarginine. Position 17 is a phosphothreonine; by AURKB and ROCK1 (Thr-17). Ser-28 carries the phosphoserine; by CDK1 modification. The residue at position 31 (Ser-31) is a Phosphoserine. Position 32 is a phosphoserine; by CDK1 (Ser-32). An Asymmetric dimethylarginine; alternate modification is found at Arg-37. Arg-37 bears the Omega-N-methylarginine; alternate mark. Ser-45 carries the post-translational modification Phosphoserine. An ADP-ribosylarginine modification is found at Arg-58. Phosphoserine; by AURKB is present on Ser-60. An Omega-N-methylarginine modification is found at Arg-70. Thr-77 carries the post-translational modification Phosphothreonine; by ROCK1. Ser-81 carries the phosphoserine modification. One can recognise an IF rod domain in the interval 108 to 416 (EKVELQELND…KLLEGEESRI (309 aa)). A coil 1A region spans residues 109-141 (KVELQELNDRFANYIEKVRFLEQQNAALAAEVN). Positions 142–151 (RLKGREPTRV) are linker 1. The tract at residues 152-252 (AEIYEEELRE…HEEEIRELQA (101 aa)) is coil 1B. The segment at 253–268 (QLQEQQVQVEMDMSKP) is linker 12. The interaction with NEB stretch occupies residues 268–415 (PDLTAALRDI…RKLLEGEESR (148 aa)). The coil 2A stretch occupies residues 269–287 (DLTAALRDIRAQYETIAAK). The linker 2 stretch occupies residues 288–295 (NISEAEEW). 4 positions are modified to phosphoserine: Ser-290, Ser-358, Ser-361, and Ser-424. A coil 2B region spans residues 296–412 (YKSKVSDLTQ…ATYRKLLEGE (117 aa)). The tract at residues 413 to 470 (ESRINLPIQTFSALNFRETSPEQRGSEVHTKKTVMIKTIETRDGEVVSEATQQQHEVL) is tail. The tract at residues 438-453 (SEVHTKKTVMIKTIET) is interaction with CRYAB.

The protein belongs to the intermediate filament family. In terms of assembly, homomer. Interacts with DST. Interacts with MTM1. Interacts with EPPK1; interaction is dependent of higher-order structure of intermediate filament. Interacts with CRYAB. Interacts with NEB (via nebulin repeats 160-164). Interacts (via rod region) with NEBL (via nebulin repeats 1-5). Interacts with ASB2; the interaction targets DES for proteasomal degradation. Interacts with PKP1. Interacts with FLII. In terms of processing, ADP-ribosylation prevents ability to form intermediate filaments. Post-translationally, phosphorylation at Ser-7, Ser-28 and Ser-32 by CDK1 and phosphorylation at Ser-60 by AURKB contribute to efficient separation of desmin intermediate filaments during mitosis. Ubiquitination by a SCF-like complex containing ASB2 leads to proteasomal degradation.

The protein resides in the cytoplasm. It is found in the myofibril. The protein localises to the sarcomere. Its subcellular location is the z line. It localises to the cell membrane. The protein resides in the sarcolemma. It is found in the nucleus. The protein localises to the cell tip. Its subcellular location is the nucleus envelope. Functionally, muscle-specific type III intermediate filament essential for proper muscular structure and function. Plays a crucial role in maintaining the structure of sarcomeres, inter-connecting the Z-disks and forming the myofibrils, linking them not only to the sarcolemmal cytoskeleton, but also to the nucleus and mitochondria, thus providing strength for the muscle fiber during activity. In adult striated muscle they form a fibrous network connecting myofibrils to each other and to the plasma membrane from the periphery of the Z-line structures. May act as a sarcomeric microtubule-anchoring protein: specifically associates with detyrosinated tubulin-alpha chains, leading to buckled microtubules and mechanical resistance to contraction. Required for nuclear membrane integrity, via anchoring at the cell tip and nuclear envelope, resulting in maintenance of microtubule-derived intracellular mechanical forces. Contributes to the transcriptional regulation of the NKX2-5 gene in cardiac progenitor cells during a short period of cardiomyogenesis and in cardiac side population stem cells in the adult. Plays a role in maintaining an optimal conformation of nebulette (NEB) on heart muscle sarcomeres to bind and recruit cardiac alpha-actin. The protein is Desmin (DES) of Bos taurus (Bovine).